The chain runs to 493 residues: MSFKDLRSFIDHLEANGELKRISYPVDPHLEMTEIADRVLRAKGPALLFENPKNHHMPVLANLFGTPKRVAMALGKDDPLALREVGELLAFLKEPEPPRGFKDAIAKIPMFKQALNMPPKTVRNPPCQQIIKTGDEVDLTQLPIQHCWPGDVAPLVTWGLTITKGPRKSRQNLGIYRQQLLGKNKLIMRWLSHRGGALDFADFKEQFPGERYPVVVALGADPVTILGAVTPVPDSMSEYAFAGLLRGERTEVCKALSCDLEVPATSEIILEGYIDPEELAEEGPYGDHTGYYNETDKFPVFTVTHITQRKDAIYHSTYTGRPPDEPAMLGVALNEVFVPILRKQYPEIVDFYLPPEGCSYRMAVISIRKQYPGHAKRVMMGAWSFLRQFMYTKFIVIVDEDVNCRDWQDVIWAITTRMDPKRDTVMIENTPIDYLDFASPVAGLGSKMGLDATNKWEGETNREWGTPIVMDPKVKQKIDSIWDELGIDDSPTL.

N172 contacts Mn(2+). Prenylated FMN contacts are provided by residues 175–177 (IYR), 189–191 (RWL), and 194–195 (RG). E238 provides a ligand contact to Mn(2+). Catalysis depends on D287, which acts as the Proton donor.

It belongs to the UbiD family. Homohexamer. It depends on prenylated FMN as a cofactor. Requires Mn(2+) as cofactor.

The protein resides in the cell membrane. It catalyses the reaction a 4-hydroxy-3-(all-trans-polyprenyl)benzoate + H(+) = a 2-(all-trans-polyprenyl)phenol + CO2. It participates in cofactor biosynthesis; ubiquinone biosynthesis. In terms of biological role, catalyzes the decarboxylation of 3-octaprenyl-4-hydroxy benzoate to 2-octaprenylphenol, an intermediate step in ubiquinone biosynthesis. In Shewanella putrefaciens (strain CN-32 / ATCC BAA-453), this protein is 3-octaprenyl-4-hydroxybenzoate carboxy-lyase.